The sequence spans 447 residues: GTPase Der (447 aa).

EngA-type G domains follow at residues 4–165 and 180–357; these read KIIA…PEEE and LQIV…KIWN. GTP-binding positions include 10 to 17, 57 to 61, 119 to 122, 186 to 193, 233 to 237, and 298 to 301; these read GRPNVGKS, DTPGL, NKCE, GRPNAGKS, DTAGL, and NKWD. Positions 358-443 constitute a KH-like domain; the sequence is KKIATSKLNE…PIRFTYVKTK (86 aa).

Belongs to the TRAFAC class TrmE-Era-EngA-EngB-Septin-like GTPase superfamily. EngA (Der) GTPase family. Associates with the 50S ribosomal subunit.

In terms of biological role, GTPase that plays an essential role in the late steps of ribosome biogenesis. This is GTPase Der from Rickettsia akari (strain Hartford).